The following is a 436-amino-acid chain: 3-ketoacyl-CoA thiolase (436 aa).

The Acyl-thioester intermediate role is filled by C99. Catalysis depends on proton acceptor residues H392 and C422.

The protein belongs to the thiolase-like superfamily. Thiolase family. As to quaternary structure, heterotetramer of two alpha chains (FadJ) and two beta chains (FadI).

The protein resides in the cytoplasm. It catalyses the reaction an acyl-CoA + acetyl-CoA = a 3-oxoacyl-CoA + CoA. Its pathway is lipid metabolism; fatty acid beta-oxidation. Its function is as follows. Catalyzes the final step of fatty acid oxidation in which acetyl-CoA is released and the CoA ester of a fatty acid two carbons shorter is formed. The polypeptide is 3-ketoacyl-CoA thiolase (Yersinia pestis bv. Antiqua (strain Angola)).